We begin with the raw amino-acid sequence, 493 residues long: Protein LTV1 homolog (493 aa).

Disordered stretches follow at residues 42-63 (AAAR…QRQE), 97-119 (PNQA…KLML), and 170-207 (IQAM…DENE). A compositionally biased stretch (acidic residues) spans 176–207 (GDSDDEEWDDEDGEEQSDMDFDSDDLNEDENE). Phosphoserine is present on residues Ser-345, Ser-369, Ser-370, Ser-424, and Ser-427. Residues 359–387 (VIDEPRRSRRSSASTNPAPIQIDPKTGLP) are disordered. Residues 437-468 (KDETHEEKKERKRLLKDYRNERRIEKKANTEA) adopt a coiled-coil conformation. The segment covering 465–474 (NTEAFKEEKK) has biased composition (basic and acidic residues). Residues 465–493 (NTEAFKEEKKRQTHVKINQRTNQQGASIV) form a disordered region. Positions 479–493 (VKINQRTNQQGASIV) are enriched in polar residues.

The protein belongs to the LTV1 family. In terms of assembly, interacts with RpS3; the interaction is RNA-independent. Associates with free 40S ribosome subunits.

It is found in the cytoplasm. In terms of biological role, necessary for the biogenesis of 40S ribosome subunits by regulating pre-rRNA processing. Non-ribosomal factor required for efficient nuclear export of the ribosomal 40S subunit. Necessary for endoreplication driven by Myc. This is Protein LTV1 homolog from Drosophila melanogaster (Fruit fly).